Here is a 555-residue protein sequence, read N- to C-terminus: Oligo-1,6-glucosidase (555 aa).

Catalysis depends on aspartate 199, which acts as the Nucleophile. The Proton donor role is filled by glutamate 255.

It belongs to the glycosyl hydrolase 13 family.

It localises to the cytoplasm. The enzyme catalyses Hydrolysis of (1-&gt;6)-alpha-D-glucosidic linkages in some oligosaccharides produced from starch and glycogen by alpha-amylase, and in isomaltose.. This chain is Oligo-1,6-glucosidase (malL), found in Heyndrickxia coagulans (Weizmannia coagulans).